The primary structure comprises 332 residues: Mediator of RNA polymerase II transcription subunit 3 (332 aa).

2 disordered regions span residues 125-206 (EPVR…PGAT) and 221-242 (SPLN…TTPS). A compositionally biased stretch (low complexity) spans 132-143 (SPSYRRPSNRSS). The segment covering 144–153 (ADTPSSNAPT) has biased composition (polar residues). 2 stretches are compositionally biased toward low complexity: residues 155–166 (SAAVVSGAALVA) and 184–200 (PSVS…SGPA).

It belongs to the Mediator complex subunit 3 family. In terms of assembly, component of the Mediator complex.

The protein localises to the nucleus. Its function is as follows. Component of the Mediator complex, a coactivator involved in regulated gene transcription of nearly all RNA polymerase II-dependent genes. Mediator functions as a bridge to convey information from gene-specific regulatory proteins to the basal RNA polymerase II transcription machinery. Mediator is recruited to promoters by direct interactions with regulatory proteins and serves as a scaffold for the assembly of a functional preinitiation complex with RNA polymerase II and the general transcription factors. This Eremothecium gossypii (strain ATCC 10895 / CBS 109.51 / FGSC 9923 / NRRL Y-1056) (Yeast) protein is Mediator of RNA polymerase II transcription subunit 3 (PGD1).